The sequence spans 394 residues: S-adenosylmethionine synthase 2 (394 aa).

Glutamate 11 provides a ligand contact to Mg(2+). Position 17 (histidine 17) interacts with ATP. Glutamate 45 is a K(+) binding site. 2 residues coordinate L-methionine: glutamate 58 and glutamine 101. ATP is bound by residues 169 to 171 (DGK), 237 to 240 (SGRF), aspartate 248, 254 to 255 (RK), alanine 271, lysine 275, and lysine 279. Aspartate 248 is a binding site for L-methionine. An L-methionine-binding site is contributed by lysine 279.

Belongs to the AdoMet synthase family. Homotetramer. It depends on Mn(2+) as a cofactor. Mg(2+) serves as cofactor. Requires Co(2+) as cofactor. K(+) is required as a cofactor.

Its subcellular location is the cytoplasm. The catalysed reaction is L-methionine + ATP + H2O = S-adenosyl-L-methionine + phosphate + diphosphate. It functions in the pathway amino-acid biosynthesis; S-adenosyl-L-methionine biosynthesis; S-adenosyl-L-methionine from L-methionine: step 1/1. Its function is as follows. Catalyzes the formation of S-adenosylmethionine from methionine and ATP. The reaction comprises two steps that are both catalyzed by the same enzyme: formation of S-adenosylmethionine (AdoMet) and triphosphate, and subsequent hydrolysis of the triphosphate. The chain is S-adenosylmethionine synthase 2 (SAM2) from Oryza sativa subsp. japonica (Rice).